Reading from the N-terminus, the 204-residue chain is MMRTLITIHPLPLLLLLQQLLQPVQFQEVDTDYDLPEDKREEFEEYVEQFFSTGPTRPPTKEKVKRLLLIEPGMPLYHVDYCNSEIMRKNVYYKHRCVAEHYFLLMQYDELQKICYNRFVPCKNGVRKCNRSKGLVEGVYCNLTEAFRIPACKYESFYRKGYVLITCAWQNEMQKLIPHTINDLVEPPEHRSFLSEDGVFVISP.

The signal sequence occupies residues 1–26 (MMRTLITIHPLPLLLLLQQLLQPVQF). Cystine bridges form between C97–C152, C115–C167, and C122–C129. N130 and N142 each carry an N-linked (GlcNAc...) asparagine glycan.

The protein belongs to the pancreatic ribonuclease family.

The protein resides in the secreted. Functionally, does not exhibit any ribonuclease activity. In Pongo pygmaeus (Bornean orangutan), this protein is Inactive ribonuclease-like protein 9 (RNASE9).